A 406-amino-acid chain; its full sequence is Kelch domain-containing protein 2 (406 aa).

6 Kelch repeats span residues 31–85, 92–136, 148–207, 221–259, 271–311, and 322–359; these read ERSG…NTEG, SGSC…ERID, LGVW…AWSQ, HACA…NELI, HSLT…IQFN, and HTAC…IFSV.

As to quaternary structure, component of a CRL2(KLHDC2) E3 ubiquitin-protein ligase complex, also named ECS(KLHDC2) complex, composed of CUL2, Elongin BC (ELOB and ELOC), RBX1 and substrate-specific adapter KLHDC2. May form oligomers as a KLHDC2-ELOB-ELOC complex; this interaction is autoinhibitory for the E3 ligase complex as the substrate-binding site of KLHDC2 is blocked in the oligomer. Interacts with CREB3; interaction is direct and specific as it does not interact with CREB1, ATF4, ATF6, JUN, FOS, CEBPA or herpes simplex virus transactivator VP16. Autoubiquitinated by the CRL2(KLHDC2) E3 ligase complex.

Its subcellular location is the nucleus. The protein operates within protein modification; protein ubiquitination. Substrate-recognition component of a Cul2-RING (CRL2) E3 ubiquitin-protein ligase complex of the DesCEND (destruction via C-end degrons) pathway, which recognizes a C-degron located at the extreme C terminus of target proteins, leading to their ubiquitination and degradation. The C-degron recognized by the DesCEND pathway is usually a motif of less than ten residues and can be present in full-length proteins, truncated proteins or proteolytically cleaved forms. The CRL2(KLHDC2) complex specifically recognizes proteins with a diglycine (Gly-Gly) at the C-terminus, leading to their ubiquitination and degradation. The CRL2(KLHDC2) complex mediates ubiquitination and degradation of truncated SELENOK and SELENOS selenoproteins produced by failed UGA/Sec decoding, which end with a diglycine. The CRL2(KLHDC2) complex also recognizes proteolytically cleaved proteins ending with Gly-Gly, such as the N-terminal fragment of USP1, leading to their degradation. May also act as an indirect repressor of CREB3-mediated transcription by interfering with CREB3-DNA-binding. This Mus musculus (Mouse) protein is Kelch domain-containing protein 2.